We begin with the raw amino-acid sequence, 90 residues long: PqqA binding protein 2 (90 aa).

This sequence belongs to the PqqD family. As to quaternary structure, monomer. Interacts with PqqE.

The protein operates within cofactor biosynthesis; pyrroloquinoline quinone biosynthesis. Functions as a PqqA binding protein and presents PqqA to PqqE, in the pyrroloquinoline quinone (PQQ) biosynthetic pathway. This chain is PqqA binding protein 2 (pqqD2), found in Pseudomonas putida (strain ATCC 47054 / DSM 6125 / CFBP 8728 / NCIMB 11950 / KT2440).